Here is an 86-residue protein sequence, read N- to C-terminus: OMEGA-stichotoxin-Shd4a (86 aa).

An N-terminal signal peptide occupies residues 1 to 23; sequence MASFRTLFACVVILCCVLWSSMA. The propeptide occupies 24–36; the sequence is RYGEDMEVETEMN. The EGF-like domain maps to 40 to 82; that stretch reads EGVRCTGQHASSFCLNGGTCRHIASLGEYYCICPGDYTGHRCD. 3 disulfide bridges follow: cysteine 44–cysteine 59, cysteine 53–cysteine 70, and cysteine 72–cysteine 81.

This sequence belongs to the EGF domain peptide family.

Its subcellular location is the secreted. It localises to the nematocyst. Has both toxic and EGF activity. Its EGF activity consists of rounding cells (morphological change) and inducing tyrosine phosphorylation of the EGFR in A431 cells, but with a lower potency that human EGF. This Stichodactyla haddoni (Saddle carpet anemone) protein is OMEGA-stichotoxin-Shd4a.